The primary structure comprises 682 residues: Methionine--tRNA ligase (682 aa).

The 'HIGH' region motif lies at P15–H25. Residues C146, C149, C159, and C162 each contribute to the Zn(2+) site. Residues K331–S335 carry the 'KMSKS' region motif. K334 contacts ATP. Residues D580–K682 enclose the tRNA-binding domain.

This sequence belongs to the class-I aminoacyl-tRNA synthetase family. MetG type 1 subfamily. As to quaternary structure, homodimer. Zn(2+) serves as cofactor.

It localises to the cytoplasm. The enzyme catalyses tRNA(Met) + L-methionine + ATP = L-methionyl-tRNA(Met) + AMP + diphosphate. In terms of biological role, is required not only for elongation of protein synthesis but also for the initiation of all mRNA translation through initiator tRNA(fMet) aminoacylation. The protein is Methionine--tRNA ligase of Haemophilus influenzae (strain ATCC 51907 / DSM 11121 / KW20 / Rd).